We begin with the raw amino-acid sequence, 510 residues long: ATP synthase subunit alpha (510 aa).

170–177 (GDRQTGKT) provides a ligand contact to ATP.

This sequence belongs to the ATPase alpha/beta chains family. In terms of assembly, F-type ATPases have 2 components, CF(1) - the catalytic core - and CF(0) - the membrane proton channel. CF(1) has five subunits: alpha(3), beta(3), gamma(1), delta(1), epsilon(1). CF(0) has three main subunits: a(1), b(2) and c(9-12). The alpha and beta chains form an alternating ring which encloses part of the gamma chain. CF(1) is attached to CF(0) by a central stalk formed by the gamma and epsilon chains, while a peripheral stalk is formed by the delta and b chains.

The protein resides in the cell inner membrane. It carries out the reaction ATP + H2O + 4 H(+)(in) = ADP + phosphate + 5 H(+)(out). In terms of biological role, produces ATP from ADP in the presence of a proton gradient across the membrane. The alpha chain is a regulatory subunit. The protein is ATP synthase subunit alpha of Dictyoglomus thermophilum (strain ATCC 35947 / DSM 3960 / H-6-12).